The primary structure comprises 111 residues: Probable 4-amino-4-deoxy-L-arabinose-phosphoundecaprenol flippase subunit ArnE (111 aa).

A run of 3 helical transmembrane segments spans residues 38–58, 61–81, and 91–111; these read LWLG…LLVL, LPVG…TLAA, and PRHW…GSAA. Residues 40 to 109 enclose the EamA domain; that stretch reads LGLALICMGA…IISGIIILGS (70 aa).

The protein belongs to the ArnE family. Heterodimer of ArnE and ArnF.

The protein localises to the cell inner membrane. Its pathway is bacterial outer membrane biogenesis; lipopolysaccharide biosynthesis. Functionally, translocates 4-amino-4-deoxy-L-arabinose-phosphoundecaprenol (alpha-L-Ara4N-phosphoundecaprenol) from the cytoplasmic to the periplasmic side of the inner membrane. The protein is Probable 4-amino-4-deoxy-L-arabinose-phosphoundecaprenol flippase subunit ArnE of Salmonella paratyphi B (strain ATCC BAA-1250 / SPB7).